A 43-amino-acid polypeptide reads, in one-letter code: Metallothionein-3 (43 aa).

It belongs to the metallothionein superfamily. Type 5 family.

This protein binds cations of several transition elements. Thought to be involved in metal ion homeostasis. This chain is Metallothionein-3 (MtnC), found in Drosophila melanogaster (Fruit fly).